A 482-amino-acid polypeptide reads, in one-letter code: NADH-quinone oxidoreductase subunit D (482 aa).

The segment covering 1 to 16 has biased composition (low complexity); it reads MTTNTSTSSTTDDLTT. A disordered region spans residues 1-48; sequence MTTNTSTSSTTDDLTTGAPNGTGAPDGANGVGGPTGTVGGPGEHPAYE. Residues 29 to 42 show a composition bias toward gly residues; that stretch reads NGVGGPTGTVGGPG.

This sequence belongs to the complex I 49 kDa subunit family. NDH-1 is composed of 14 different subunits. Subunits NuoB, C, D, E, F, and G constitute the peripheral sector of the complex.

It localises to the cell membrane. The enzyme catalyses a quinone + NADH + 5 H(+)(in) = a quinol + NAD(+) + 4 H(+)(out). In terms of biological role, NDH-1 shuttles electrons from NADH, via FMN and iron-sulfur (Fe-S) centers, to quinones in the respiratory chain. The immediate electron acceptor for the enzyme in this species is believed to be a menaquinone. Couples the redox reaction to proton translocation (for every two electrons transferred, four hydrogen ions are translocated across the cytoplasmic membrane), and thus conserves the redox energy in a proton gradient. This chain is NADH-quinone oxidoreductase subunit D, found in Frankia casuarinae (strain DSM 45818 / CECT 9043 / HFP020203 / CcI3).